Reading from the N-terminus, the 604-residue chain is Prostaglandin G/H synthase 2 (604 aa).

An N-terminal signal peptide occupies residues 1–17; it reads MLARAGLLCASLSPPHA. In terms of domain architecture, EGF-like spans 18 to 55; the sequence is ANPCCSNPCQNQGVCMSIGFDQYMCDCSRTGFYGENCS. Cystine bridges form between Cys21/Cys32, Cys22/Cys145, Cys26/Cys42, and Cys44/Cys54. A glycan (N-linked (GlcNAc...) asparagine) is linked at Asn53. Arg106 is a substrate binding site. A glycan (N-linked (GlcNAc...) asparagine) is linked at Asn130. Catalysis depends on His193, which acts as the Proton acceptor. Tyr341 contributes to the substrate binding site. The active-site For cyclooxygenase activity is the Tyr371. His374 provides a ligand contact to heme b. Asn396 is a glycosylation site (N-linked (GlcNAc...) asparagine). S-nitrosocysteine is present on Cys526. Cys555 and Cys561 are joined by a disulfide. A glycan (N-linked (GlcNAc...) asparagine) is linked at Asn580.

It belongs to the prostaglandin G/H synthase family. In terms of assembly, homodimer. Requires heme b as cofactor. S-nitrosylation by NOS2 (iNOS) activates enzyme activity. S-nitrosylation may take place on different Cys residues in addition to Cys-526.

It is found in the microsome membrane. It localises to the endoplasmic reticulum membrane. The protein resides in the nucleus inner membrane. Its subcellular location is the nucleus outer membrane. It catalyses the reaction (5Z,8Z,11Z,14Z)-eicosatetraenoate + AH2 + 2 O2 = prostaglandin H2 + A + H2O. The catalysed reaction is (5Z,8Z,11Z,14Z)-eicosatetraenoate + 2 O2 = prostaglandin G2. It carries out the reaction prostaglandin G2 + AH2 = prostaglandin H2 + A + H2O. The enzyme catalyses (5Z,8Z,11Z,14Z,17Z)-eicosapentaenoate + 2 O2 = prostaglandin G3. It catalyses the reaction prostaglandin G3 + AH2 = prostaglandin H3 + A + H2O. The catalysed reaction is (8Z,11Z,14Z)-eicosatrienoate + 2 O2 = prostaglandin G1. It carries out the reaction prostaglandin G1 + AH2 = prostaglandin H1 + A + H2O. The enzyme catalyses 2-(5Z,8Z,11Z,14Z)-eicosatetraenoyl-sn-glycero-3-phosphoethanolamine + 2 O2 = 2-(prostaglandin G2)-sn-glycero-3-phosphoethanolamine. It catalyses the reaction 2-(prostaglandin G2)-sn-glycero-3-phosphoethanolamine + AH2 = 2-(prostaglandin H2)-sn-glycero-3-phosphoethanolamine + A + H2O. The catalysed reaction is 2-(5Z,8Z,11Z,14Z)-eicosatetraenoyl-sn-glycero-3-phosphocholine + 2 O2 = 2-(prostaglandin G2)-sn-glycero-3-phosphocholine. It carries out the reaction 2-(prostaglandin G2)-sn-glycero-3-phosphocholine + AH2 = 2-(prostaglandin H2)-sn-glycero-3-phosphocholine + A + H2O. The enzyme catalyses (15S)-hydroperoxy-(5Z,8Z,11Z,13E)-eicosatetraenoate + AH2 = (15S)-hydroxy-(5Z,8Z,11Z,13E)-eicosatetraenoate + A + H2O. It catalyses the reaction 2-(5Z,8Z,11Z,14Z)-eicosatetraenoyl-sn-glycero-3-phosphocholine + AH2 + O2 = 2-[(15S)-hydroxy-(5Z,8Z,11Z,13E)-eicosatetraenoyl]-sn-glycero-3-phosphocholine + A + H2O. The catalysed reaction is 2-(5Z,8Z,11Z,14Z)-eicosatetraenoyl-sn-glycero-3-phosphocholine + AH2 + O2 = 2-[(15R)-hydroxy-(5Z,8Z,11Z,13E)-eicosatetraenoyl]-sn-glycero-3-phosphocholine + A + H2O. It carries out the reaction 2-(5Z,8Z,11Z,14Z)-eicosatetraenoyl-sn-glycero-3-phosphocholine + AH2 + O2 = 2-[(11R)-hydroxy-(5Z,8Z,12E,14Z)-eicosatetraenoyl]-sn-glycero-3-phosphocholine + A + H2O. The enzyme catalyses (9Z,12Z)-octadecadienoate + AH2 + O2 = 9-hydroxy-(10E,12Z)-octadecadienoate + A + H2O. It catalyses the reaction (9Z,12Z)-octadecadienoate + AH2 + O2 = 13-hydroxy-(9Z,11E)-octadecadienoate + A + H2O. The catalysed reaction is (5Z,8Z,11Z,14Z)-eicosatetraenoate + AH2 + O2 = (15R)-hydroxy-(5Z,8Z,11Z,13E)-eicosatetraenoate + A + H2O. It carries out the reaction (5Z,8Z,11Z,14Z)-eicosatetraenoate + AH2 + O2 = (11R)-hydroxy-(5Z,8Z,12E,14Z)-eicosatetraenoate + A + H2O. The enzyme catalyses (5Z,8Z,11Z,14Z,17Z)-eicosapentaenoate + AH2 + O2 = (11R)-hydroxy-(5Z,8Z,12E,14Z,17Z)-eicosapentaenoate + A + H2O. It catalyses the reaction (5Z,8Z,11Z,14Z,17Z)-eicosapentaenoate + AH2 + O2 = (18S)-hydroxy-(5Z,8Z,11Z,14Z,16E)-eicosapentaenoate + A + H2O. The catalysed reaction is (5Z,8Z,11Z,14Z,17Z)-eicosapentaenoate + AH2 + O2 = (18R)-hydroxy-(5Z,8Z,11Z,14Z,16E)-eicosapentaenoate + A + H2O. It carries out the reaction (5Z,8Z,11Z,14Z,17Z)-eicosapentaenoate + AH2 + O2 = (15R)-hydroxy-(5Z,8Z,11Z,13E,17Z)-eicosapentaenoate + A + H2O. The enzyme catalyses (5Z,8Z,11Z,14Z,17Z)-eicosapentaenoate + AH2 + O2 = (15S)-hydroxy-(5Z,8Z,11Z,13E,17Z)-eicosapentaenoate + A + H2O. It catalyses the reaction (7Z,10Z,13Z,16Z,19Z)-docosapentaenoate + AH2 + O2 = 13R-hydroxy-(7Z,10Z,14E,16Z,19Z)-docosapentaenoate + A + H2O. The catalysed reaction is (4Z,7Z,10Z,13Z,16Z,19Z)-docosahexaenoate + AH2 + O2 = 13-hydroxy-(4Z,7Z,10Z,14E,16Z,19Z)-docosahexaenoate + A + H2O. It carries out the reaction (5S)-hydroxy-(6E,8Z,11Z,14Z)-eicosatetraenoate + AH2 + O2 = (5S,15R)-dihydroxy-(6E,8Z,11Z,13E)-eicosatetraenoate + A + H2O. The enzyme catalyses (4Z,7Z,10Z,13Z,16Z,19Z)-docosahexaenoate + AH2 + O2 = 17R-hydroxy-(4Z,7Z,10Z,13Z,15E,19Z)-docosahexaenoate + A + H2O. It catalyses the reaction (5S)-hydroxy-(6E,8Z,11Z,14Z)-eicosatetraenoate + AH2 + O2 = (5S,15S)-dihydroxy-(6E,8Z,11Z,13E)-eicosatetraenoate + A + H2O. The catalysed reaction is (5S)-hydroxy-(6E,8Z,11Z,14Z)-eicosatetraenoate + AH2 + O2 = (5S,11R)-dihydroxy-(6E,8Z,12E,14Z)-eicosatetraenoate + A + H2O. It carries out the reaction 2-(5Z,8Z,11Z,14Z-eicosatetraenoyl)-glycerol + 2 O2 = 2-glyceryl-prostaglandin G2. The enzyme catalyses 2-glyceryl-prostaglandin G2 + AH2 = 2-glyceryl-prostaglandin H2 + A + H2O. It catalyses the reaction (5Z,8Z,11Z,14Z)-eicosatetraenoate + O2 = (15R)-hydroperoxy-(5Z,8Z,11Z,13E)-eicosatetraenoate. The catalysed reaction is (5Z,8Z,11Z,14Z)-eicosatetraenoate + O2 = 11R-hydroperoxy-(5Z,8Z,12E,14Z)-eicosatetraenoate. It carries out the reaction (9Z,12Z)-octadecadienoate + AH2 + O2 = (9R)-hydroxy-(10E,12Z)-octadecadienoate + A + H2O. The enzyme catalyses (9Z,12Z)-octadecadienoate + AH2 + O2 = (9S)-hydroxy-(10E,12Z)-octadecadienoate + A + H2O. It catalyses the reaction (9Z,12Z)-octadecadienoate + AH2 + O2 = (13S)-hydroxy-(9Z,11E)-octadecadienoate + A + H2O. The catalysed reaction is (9Z,12Z)-octadecadienoate + AH2 + O2 = (13R)-hydroxy-(9Z,11E)-octadecadienoate + A + H2O. Its pathway is lipid metabolism; prostaglandin biosynthesis. Dual cyclooxygenase and peroxidase in the biosynthesis pathway of prostanoids, a class of C20 oxylipins mainly derived from arachidonate ((5Z,8Z,11Z,14Z)-eicosatetraenoate, AA, C20:4(n-6)), with a particular role in the inflammatory response. The cyclooxygenase activity oxygenates AA to the hydroperoxy endoperoxide prostaglandin G2 (PGG2), and the peroxidase activity reduces PGG2 to the hydroxy endoperoxide prostaglandin H2 (PGH2), the precursor of all 2-series prostaglandins and thromboxanes. This complex transformation is initiated by abstraction of hydrogen at carbon 13 (with S-stereochemistry), followed by insertion of molecular O2 to form the endoperoxide bridge between carbon 9 and 11 that defines prostaglandins. The insertion of a second molecule of O2 (bis-oxygenase activity) yields a hydroperoxy group in PGG2 that is then reduced to PGH2 by two electrons. Similarly catalyzes successive cyclooxygenation and peroxidation of dihomo-gamma-linoleate (DGLA, C20:3(n-6)) and eicosapentaenoate (EPA, C20:5(n-3)) to corresponding PGH1 and PGH3, the precursors of 1- and 3-series prostaglandins. In an alternative pathway of prostanoid biosynthesis, converts 2-arachidonoyl lysophopholipids to prostanoid lysophopholipids, which are then hydrolyzed by intracellular phospholipases to release free prostanoids. Metabolizes 2-arachidonoyl glycerol yielding the glyceryl ester of PGH2, a process that can contribute to pain response. Generates lipid mediators from n-3 and n-6 polyunsaturated fatty acids (PUFAs) via a lipoxygenase-type mechanism. Oxygenates PUFAs to hydroperoxy compounds and then reduces them to corresponding alcohols. Plays a role in the generation of resolution phase interaction products (resolvins) during both sterile and infectious inflammation. Metabolizes docosahexaenoate (DHA, C22:6(n-3)) to 17R-HDHA, a precursor of the D-series resolvins (RvDs). As a component of the biosynthetic pathway of E-series resolvins (RvEs), converts eicosapentaenoate (EPA, C20:5(n-3)) primarily to 18S-HEPE that is further metabolized by ALOX5 and LTA4H to generate 18S-RvE1 and 18S-RvE2. In vascular endothelial cells, converts docosapentaenoate (DPA, C22:5(n-3)) to 13R-HDPA, a precursor for 13-series resolvins (RvTs) shown to activate macrophage phagocytosis during bacterial infection. In activated leukocytes, contributes to oxygenation of hydroxyeicosatetraenoates (HETE) to diHETES (5,15-diHETE and 5,11-diHETE). Can also use linoleate (LA, (9Z,12Z)-octadecadienoate, C18:2(n-6)) as substrate and produce hydroxyoctadecadienoates (HODEs) in a regio- and stereospecific manner, being (9R)-HODE ((9R)-hydroxy-(10E,12Z)-octadecadienoate) and (13S)-HODE ((13S)-hydroxy-(9Z,11E)-octadecadienoate) its major products. During neuroinflammation, plays a role in neuronal secretion of specialized preresolving mediators (SPMs) 15R-lipoxin A4 that regulates phagocytic microglia. The sequence is that of Prostaglandin G/H synthase 2 (PTGS2) from Neovison vison (American mink).